A 1264-amino-acid chain; its full sequence is MSNQQQQQLPRQLPQPHPHHHHHHHQQQPGQHSEFPLPDGWDIARDFDGKTYYIDHINKKTTWLDPRDRYTKPQSFEDCVGDELPVGWEEAYDSNIGRYYINHIAQTTQLEDPRQEWKSVQEQMLSDYLSAAQDQLENKREMYDVKQQRLNLAQEEYNHLNKLAASRSSLCSSSSSMSRHDPELLRADLMLARERVRQLKQELNHITNDISYTERGMNTLYSVGEKINARQNGCYDIAEVQAIREEMLKVHKSLVSGEKVREELMRSLVQIKNELSRQQINEENAELLSATSPFDRVCVASQTDLCGAGEHLNGGARFAEMAKTKLQYAEWRKHIKKLQQQLADHVERIEPGQLESDKDRILLIQEKEKLLNDLNSISLKSRSAEEKLVIQQTRHKLEEDLKEAYEATNTCVANRLRFHEEKQLLLAKLQEALKSTNLLEERLKSFSSESTFSISSGSSLGSLSTASSKSALSFTDIYIDPFAVGESPIDVVDLQRRSQRLFQQHQRLPPVHPAVQLQQQHQLQQQTQPQPASEVSLSPRSSLSIETPPASPMKYNAIADQPQAQAQAALKEEPTYANAMPAPPAYTAPPSVPMALAAVRTHPYDLDSTVLDCMMLEAKLQKLNLSSPLNLNGPLSPISEKPSLLDLPQEMLSRSSSTSNTRSVSAAVSNESVAGDSGVFEASRAHLPRKELAQVQIGLKYLKQEGVLVVSLERANNLSALWTATTDNSQVYLRAALLPNSLTSIRTKALGDFQKPVFNDTFAVPISLDKLLTKSLQVTVVTMTGQKEEIIGTVQISMAEFNPDDSTLKWYNVLSSKFIPTFESLDLPSTSAAAAAAAVAASNNIINNNNNNNNNNIREESSDESTITSSQTSTLTRNQAPPLELQAQIAEELPEHVRLNEQQCSDDDDDDDEEEDEQQLVGTLGLTHSGCMLDAYLENMKQEYADKETNTDCAFPPEKLRSQTQLLDDRPVKRSQTFTPSAAVSKNRYNCRLNRSDSDSAMHFGVTPHTFHRGAVERRSLRFQPKATKSVTKLHHTHIPRTSLDLELDLQAQHSKLYFLNDQISKLQNLKEVLQKACDNKDPLIAAWAIENEEFQRLVARADPTKCPEERLLQKLLMKTTKEIHKLRKTKVPKGCPDLVSFKEKMFFFTRKGMSVPELPNDFLLPDAQAIEEEEEDDDEDNVAETAIAINTALVASSNRNKNLSEHHHRSTGGAVSKLTATPTPAINPAPVATPVPATSNANEANGEQQRYDYVVDRNYGVEV.

Over residues 1-14 (MSNQQQQQLPRQLP) the composition is skewed to low complexity. A disordered region spans residues 1–40 (MSNQQQQQLPRQLPQPHPHHHHHHHQQQPGQHSEFPLPDG). Positions 17 to 26 (HPHHHHHHHQ) are enriched in basic residues. 2 consecutive WW domains span residues 35–68 (FPLP…DPRD) and 82–115 (DELP…DPRQ). Coiled coils occupy residues 129-215 (LSAA…YTER), 258-288 (EKVR…AELL), and 319-445 (AEMA…RLKS). Residues 513–544 (PAVQLQQQHQLQQQTQPQPASEVSLSPRSSLS) show a composition bias toward low complexity. The tract at residues 513–545 (PAVQLQQQHQLQQQTQPQPASEVSLSPRSSLSI) is disordered. The C2 domain maps to 691-811 (ELAQVQIGLK…NPDDSTLKWY (121 aa)). Low complexity-rich tracts occupy residues 845–856 (IINNNNNNNNNN) and 864–876 (ESTI…STLT). 2 disordered regions span residues 845–880 (IINN…RNQA) and 1200–1254 (RNKN…RYDY).

The protein belongs to the WWC family. KIBRA subfamily. Forms a complex with Mer and Ex. Interacts (via domain WW 1) with Ex (via RXPPXY motif). Interacts with Mer, Sav, Hpo and Wts.

The protein resides in the cytoplasm. The protein localises to the apical cell membrane. In terms of biological role, regulator of the Hippo/SWH (Sav/Wts/Hpo) signaling pathway, a signaling pathway that plays a pivotal role in organ size control and tumor suppression by restricting proliferation and promoting apoptosis. The core of this pathway is composed of a kinase cascade wherein Hippo (Hpo), in complex with its regulatory protein Salvador (Sav), phosphorylates and activates Warts (Wts) in complex with its regulatory protein Mats, which in turn phosphorylates and inactivates the Yorkie (Yki) oncoprotein. Kibra acts synergistically along with Ex and Mer to regulate the Hippo signaling pathway. This is Protein kibra (Kibra) from Drosophila mojavensis (Fruit fly).